The sequence spans 115 residues: Immunoglobulin kappa variable 5-48 (115 aa).

The N-terminal stretch at 1-20 (MVSTPQFLVFLLFWIPASRG) is a signal peptide. The framework-1 stretch occupies residues 21–43 (DILLTQSPAILSVSPGERVSFSC). A disulfide bridge links C43 with C108. The tract at residues 44–54 (RASQSIGTSIH) is complementarity-determining-1. The framework-2 stretch occupies residues 55-69 (WYQQRTNGSPRLLIK). Residues 70 to 76 (YASESIS) are complementarity-determining-2. Positions 77-108 (GIPSRFSGSGSGTDFTLSINSVESEDIADYYC) are framework-3. A complementarity-determining-3 region spans residues 109 to 115 (QQSNSWP).

This Mus musculus (Mouse) protein is Immunoglobulin kappa variable 5-48.